The following is a 440-amino-acid chain: Adenylosuccinate synthetase (440 aa).

GTP is bound by residues 11–17 and 39–41; these read GDEGKGG and GHT. Asp-12 functions as the Proton acceptor in the catalytic mechanism. Mg(2+) is bound by residues Asp-12 and Gly-39. IMP is bound by residues 12 to 15, 37 to 40, Thr-127, Arg-141, Gln-230, Thr-245, and Arg-311; these read DEGK and NAGH. The active-site Proton donor is His-40. 307 to 313 contacts substrate; it reads TVTGRPR. Residues Arg-313, 339 to 341, and 424 to 426 contribute to the GTP site; these read HLD and GVG.

Belongs to the adenylosuccinate synthetase family. In terms of assembly, homodimer. The cofactor is Mg(2+).

The protein resides in the cytoplasm. The catalysed reaction is IMP + L-aspartate + GTP = N(6)-(1,2-dicarboxyethyl)-AMP + GDP + phosphate + 2 H(+). The protein operates within purine metabolism; AMP biosynthesis via de novo pathway; AMP from IMP: step 1/2. Its function is as follows. Plays an important role in the de novo pathway of purine nucleotide biosynthesis. Catalyzes the first committed step in the biosynthesis of AMP from IMP. The chain is Adenylosuccinate synthetase from Halobacterium salinarum (strain ATCC 29341 / DSM 671 / R1).